The chain runs to 530 residues: Bifunctional purine biosynthesis protein PurH (530 aa).

Positions 1–148 (MEQARPIRRA…KNHKDVAIVV (148 aa)) constitute an MGS-like domain.

Belongs to the PurH family.

The enzyme catalyses (6R)-10-formyltetrahydrofolate + 5-amino-1-(5-phospho-beta-D-ribosyl)imidazole-4-carboxamide = 5-formamido-1-(5-phospho-D-ribosyl)imidazole-4-carboxamide + (6S)-5,6,7,8-tetrahydrofolate. It catalyses the reaction IMP + H2O = 5-formamido-1-(5-phospho-D-ribosyl)imidazole-4-carboxamide. The protein operates within purine metabolism; IMP biosynthesis via de novo pathway; 5-formamido-1-(5-phospho-D-ribosyl)imidazole-4-carboxamide from 5-amino-1-(5-phospho-D-ribosyl)imidazole-4-carboxamide (10-formyl THF route): step 1/1. Its pathway is purine metabolism; IMP biosynthesis via de novo pathway; IMP from 5-formamido-1-(5-phospho-D-ribosyl)imidazole-4-carboxamide: step 1/1. The sequence is that of Bifunctional purine biosynthesis protein PurH from Aeromonas hydrophila subsp. hydrophila (strain ATCC 7966 / DSM 30187 / BCRC 13018 / CCUG 14551 / JCM 1027 / KCTC 2358 / NCIMB 9240 / NCTC 8049).